The following is a 158-amino-acid chain: Small ribosomal subunit protein uS15 (158 aa).

Positions 1–10 are enriched in basic residues; that stretch reads MARMHTRRRG. Residues 1–66 are disordered; sequence MARMHTRRRG…EGVKGTPIPD (66 aa). A compositionally biased stretch (acidic residues) spans 21–32; it reads DPPEWSDIDADA. Over residues 33–45 the composition is skewed to basic and acidic residues; sequence IEERVVELAEQGH.

It belongs to the universal ribosomal protein uS15 family. As to quaternary structure, part of the 30S ribosomal subunit.

The protein is Small ribosomal subunit protein uS15 of Haloquadratum walsbyi (strain DSM 16790 / HBSQ001).